The following is a 385-amino-acid chain: Trans-enoyl reductase tasC (385 aa).

49-52 contributes to the NADP(+) binding site; that stretch reads VDTK. Residue 136–143 participates in substrate binding; the sequence is NSWYTVAW. Residues 196–199, 219–222, and 284–285 each bind NADP(+); these read SSST, SARN, and LD. 305-309 contributes to the substrate binding site; the sequence is GPELM. Position 374 to 375 (374 to 375) interacts with NADP(+); that stretch reads VS.

Belongs to the zinc-containing alcohol dehydrogenase family. In terms of assembly, monomer.

It carries out the reaction (2S,4S)-4-hydroxy-4-methylglutamate + 8 malonyl-CoA + 3 S-adenosyl-L-methionine + ATP + 8 NADPH + 11 H(+) = (2S)-3-[(2S)-3,5-dioxo-4-[(2E,4R,6R,8E,10E,12E)-4,6,12-trimethyltetradeca-2,8,10,12-tetraenoyl]pyrrolidin-2-yl]-2-hydroxy-2-methylpropanoate + AMP + 3 S-adenosyl-L-homocysteine + 8 CO2 + diphosphate + 8 NADP(+) + 8 CoA + 6 H2O. The catalysed reaction is (2S,4R)-4-hydroxy-4-methylglutamate + 8 malonyl-CoA + 3 S-adenosyl-L-methionine + ATP + 8 NADPH + 11 H(+) = (2R)-3-[(2S)-3,5-dioxo-4-[(2E,4R,6R,8E,10E,12E)-4,6,12-trimethyltetradeca-2,8,10,12-tetraenoyl]pyrrolidin-2-yl]-2-hydroxy-2-methylpropanoate + AMP + 3 S-adenosyl-L-homocysteine + 8 CO2 + diphosphate + 8 NADP(+) + 8 CoA + 6 H2O. It participates in secondary metabolite biosynthesis. Functionally, trans-enoyl reductase; part of the gene cluster that mediates the biosynthesis of the tetramic acids Sch210971 and Sch210972, potential anti-HIV fungal natural product that contain a decalin core. The PKS module of tasS together with the enoylreductase tasC catalyze the formation of the polyketide unit which is then conjugated to 4-hydroxyl-4-methyl glutamate (HMG) by the condensation domain of the tasS NRPS module. One unique structural feature of Sch210971 and Sch210972 is the tetramic acid motif proposed to be derived from the non-proteinogenic amino acid HMG, by a Dieckmann-type condensation catalyzed by the reductase domain of tasS. The aldolase tasA catalyzes the aldol condensation of 2 molecules of pyruvic acid to yield the intermediate 4-hydroxyl-4-methyl-2-oxoglutarate (HMOG), which can then be stereoselectively transaminated, may be by tasG, to form HMG. The Diels-Alderase tas3 then uses the Dieckmann product of tasS as substrate and catalyzes the Diels-Alder cycloaddition to form the decalin ring of Sch210971 and Sch210972. The protein is Trans-enoyl reductase tasC of Hapsidospora irregularis.